The following is a 367-amino-acid chain: MVMEVGILDAGGLRALLRERAAQCLLLDCRSFFAFNAGHIVGSVNVRFSTIVRRRAKGAMGLEHIVPNTELRGRLLAGAYHAVVLLDERSAALDGAKRDGTLALAAGALCREARSTQVFFLQGGYEAFSASCPELCSKQSTPMGLSLPLSTSVPDSAESGCSSCSTPLYDQGGPVEILSFLYLGSAYHASRKDMLDALGITALINVSANCPNHFEGHYQYKSIPVEDNHKADISSWFNEAIDFIDSIKDAGGRVFVHCQAGISRSATICLAYLMRTNRVKLDEAFEFVKQRRSIISPNFSFMGQLLQFESQVLAPHCSAEAGSPAMAVLDRGTSTTTVFNFPVSIPVHPTNSALNYLQSPITTSPSC.

A Rhodanese domain is found at 20 to 137; it reads RAAQCLLLDC…FSASCPELCS (118 aa). Residues 173-314 form the Tyrosine-protein phosphatase domain; the sequence is GPVEILSFLY…LLQFESQVLA (142 aa). The active-site Phosphocysteine intermediate is the Cys-258. A phosphoserine; by MAPK1 and MAPK3 mark is found at Ser-359 and Ser-364.

Belongs to the protein-tyrosine phosphatase family. Non-receptor class dual specificity subfamily. Post-translationally, phosphorylation at Ser-359 and Ser-364 by MAPK1/ERK2 and MAPK3/ERK1 reduces its rate of degradation. 'Lys-48'-linked polyubiquitinated by NEURL3, leading to proteasomal degradation. As to expression, brain. High level expression seen in the cingulate gyrus within the retrospinal cortex, ventral and medial divisions of the anterior thalamus and the medial geniculate nucleus. Expressed at moderate levels in the parietal and temporal cortex. Expressed in the cerebellum.

It localises to the nucleus. The enzyme catalyses O-phospho-L-tyrosyl-[protein] + H2O = L-tyrosyl-[protein] + phosphate. It catalyses the reaction O-phospho-L-seryl-[protein] + H2O = L-seryl-[protein] + phosphate. It carries out the reaction O-phospho-L-threonyl-[protein] + H2O = L-threonyl-[protein] + phosphate. Functionally, dual specificity phosphatase that dephosphorylates MAP kinase MAPK1/ERK2 on both 'Thr-183' and 'Tyr-185', regulating its activity during the meiotic cell cycle. The chain is Dual specificity protein phosphatase 1 from Rattus norvegicus (Rat).